We begin with the raw amino-acid sequence, 685 residues long: DNA ligase (685 aa).

NAD(+) is bound by residues 39–43 (DGEYD), 88–89 (SL), and glutamate 119. Lysine 121 (N6-AMP-lysine intermediate) is an active-site residue. NAD(+) is bound by residues arginine 142, glutamate 182, lysine 302, and lysine 326. Cysteine 420, cysteine 423, cysteine 438, and cysteine 443 together coordinate Zn(2+). The 80-residue stretch at 606–685 (DNATFFSEKR…QTFLEHLDRG (80 aa)) folds into the BRCT domain.

It belongs to the NAD-dependent DNA ligase family. LigA subfamily. Mg(2+) is required as a cofactor. It depends on Mn(2+) as a cofactor.

It catalyses the reaction NAD(+) + (deoxyribonucleotide)n-3'-hydroxyl + 5'-phospho-(deoxyribonucleotide)m = (deoxyribonucleotide)n+m + AMP + beta-nicotinamide D-nucleotide.. Its function is as follows. DNA ligase that catalyzes the formation of phosphodiester linkages between 5'-phosphoryl and 3'-hydroxyl groups in double-stranded DNA using NAD as a coenzyme and as the energy source for the reaction. It is essential for DNA replication and repair of damaged DNA. This is DNA ligase from Desulforapulum autotrophicum (strain ATCC 43914 / DSM 3382 / VKM B-1955 / HRM2) (Desulfobacterium autotrophicum).